Reading from the N-terminus, the 99-residue chain is DNA/RNA-binding protein Alba 1 (99 aa).

Lys17 carries the post-translational modification N6-acetyllysine.

It belongs to the histone-like Alba family. Acetylated. Acetylation at Lys-17 decreases DNA-binding affinity.

The protein resides in the cytoplasm. The protein localises to the chromosome. In terms of biological role, binds double-stranded DNA tightly but without sequence specificity. Involved in DNA compaction. In Sulfurisphaera tokodaii (strain DSM 16993 / JCM 10545 / NBRC 100140 / 7) (Sulfolobus tokodaii), this protein is DNA/RNA-binding protein Alba 1.